The primary structure comprises 415 residues: MYFYNLVKNTDPEIAEAIKSELKRQQNKIELIASENFVSIAVMAAMGSPLTNKYAEGYPGKRYYGGCEYIDVVESIAIERAKKLFGAEHANVQPHSGAQANMAVYFAVLNPGDTILGMNLSHGGHLTHGSPVNFSGKLYNIISYGVDPETETINYDEVLKLAKEHRPKLILAGASAYPRVIDFKKFREIADEVGAYLMVDMAHIAGLVAAGLHPSPVEYADFVTTTTHKTLRGPRGGLILCKEKYAKLIDKSIFPGIQGGPLEHVIAAKAVALKEAMTEEFKNYQVQILKNAKALSTRLIERGFRLVSGGTDNHLMLVDLRNKGITGKDAEKILDEHNITCNKNAVPFDTQSPMITSGIRLGTPAVTTRGFKEGDMLEVADIIHDALTNSDTKENILIRVKALCEKHPLYKEFDE.

Residues L120 and 124–126 (GHL) contribute to the (6S)-5,6,7,8-tetrahydrofolate site. N6-(pyridoxal phosphate)lysine is present on K229.

Belongs to the SHMT family. As to quaternary structure, homodimer. It depends on pyridoxal 5'-phosphate as a cofactor.

The protein localises to the cytoplasm. The catalysed reaction is (6R)-5,10-methylene-5,6,7,8-tetrahydrofolate + glycine + H2O = (6S)-5,6,7,8-tetrahydrofolate + L-serine. It participates in one-carbon metabolism; tetrahydrofolate interconversion. Its pathway is amino-acid biosynthesis; glycine biosynthesis; glycine from L-serine: step 1/1. Functionally, catalyzes the reversible interconversion of serine and glycine with tetrahydrofolate (THF) serving as the one-carbon carrier. This reaction serves as the major source of one-carbon groups required for the biosynthesis of purines, thymidylate, methionine, and other important biomolecules. Also exhibits THF-independent aldolase activity toward beta-hydroxyamino acids, producing glycine and aldehydes, via a retro-aldol mechanism. The sequence is that of Serine hydroxymethyltransferase from Caldicellulosiruptor bescii (strain ATCC BAA-1888 / DSM 6725 / KCTC 15123 / Z-1320) (Anaerocellum thermophilum).